Here is a 352-residue protein sequence, read N- to C-terminus: Histidinol-phosphate aminotransferase (352 aa).

Lys-221 is modified (N6-(pyridoxal phosphate)lysine).

The protein belongs to the class-II pyridoxal-phosphate-dependent aminotransferase family. Histidinol-phosphate aminotransferase subfamily. In terms of assembly, homodimer. Pyridoxal 5'-phosphate is required as a cofactor.

It carries out the reaction L-histidinol phosphate + 2-oxoglutarate = 3-(imidazol-4-yl)-2-oxopropyl phosphate + L-glutamate. The protein operates within amino-acid biosynthesis; L-histidine biosynthesis; L-histidine from 5-phospho-alpha-D-ribose 1-diphosphate: step 7/9. In Staphylococcus aureus (strain Mu3 / ATCC 700698), this protein is Histidinol-phosphate aminotransferase.